A 105-amino-acid chain; its full sequence is Ribosomal silencing factor RsfS (105 aa).

The protein belongs to the Iojap/RsfS family. As to quaternary structure, interacts with ribosomal protein uL14 (rplN).

Its subcellular location is the cytoplasm. Its function is as follows. Functions as a ribosomal silencing factor. Interacts with ribosomal protein uL14 (rplN), blocking formation of intersubunit bridge B8. Prevents association of the 30S and 50S ribosomal subunits and the formation of functional ribosomes, thus repressing translation. The chain is Ribosomal silencing factor RsfS from Escherichia coli O6:H1 (strain CFT073 / ATCC 700928 / UPEC).